The sequence spans 435 residues: 5-methylthioadenosine/S-adenosylhomocysteine deaminase (435 aa).

Zn(2+) is bound by residues H65 and H67. Substrate-binding residues include E94, R150, and H189. H216 provides a ligand contact to Zn(2+). Substrate-binding residues include E219 and D304. D304 is a Zn(2+) binding site.

It belongs to the metallo-dependent hydrolases superfamily. MTA/SAH deaminase family. Requires Zn(2+) as cofactor.

It catalyses the reaction S-adenosyl-L-homocysteine + H2O + H(+) = S-inosyl-L-homocysteine + NH4(+). It carries out the reaction S-methyl-5'-thioadenosine + H2O + H(+) = S-methyl-5'-thioinosine + NH4(+). In terms of biological role, catalyzes the deamination of 5-methylthioadenosine and S-adenosyl-L-homocysteine into 5-methylthioinosine and S-inosyl-L-homocysteine, respectively. Is also able to deaminate adenosine. This Bacillus cereus (strain G9842) protein is 5-methylthioadenosine/S-adenosylhomocysteine deaminase.